Here is a 211-residue protein sequence, read N- to C-terminus: Glutathione S-transferase class-mu 28 kDa isozyme (211 aa).

A GST N-terminal domain is found at 4–86; that stretch reads DHIKVIYFNG…YMAKKHHMMG (83 aa). Glutathione is bound by residues Tyr-10, Arg-16, Trp-41, Lys-45, Leu-53, Glu-70, Ser-71, and Asp-104. The region spanning 88–211 is the GST C-terminal domain; the sequence is TDEEYYNVEK…YLSDRAATPF (124 aa).

Belongs to the GST superfamily. Mu family. Homodimer.

The enzyme catalyses RX + glutathione = an S-substituted glutathione + a halide anion + H(+). In terms of biological role, conjugation of reduced glutathione to a wide number of exogenous and endogenous hydrophobic electrophiles. GST isoenzymes appear to play a central role in the parasite detoxification system. Other functions are also suspected including a role in increasing the solubility of haematin in the parasite gut. This is Glutathione S-transferase class-mu 28 kDa isozyme from Schistosoma bovis (Blood fluke).